Consider the following 142-residue polypeptide: HTH-type transcriptional regulator MntR (142 aa).

An HTH dtxR-type domain is found at 1-63 (MPTPSMEDYI…YEKYRGLILT (63 aa)). Aspartate 8, glutamate 11, histidine 77, glutamate 99, glutamate 102, and histidine 103 together coordinate Mn(2+).

Belongs to the DtxR/MntR family. As to quaternary structure, homodimer.

It localises to the cytoplasm. Its activity is regulated as follows. DNA binding is strongly activated by Mn(2+). In terms of biological role, central regulator of manganese homeostasis. The sequence is that of HTH-type transcriptional regulator MntR from Listeria welshimeri serovar 6b (strain ATCC 35897 / DSM 20650 / CCUG 15529 / CIP 8149 / NCTC 11857 / SLCC 5334 / V8).